A 194-amino-acid polypeptide reads, in one-letter code: uncharacterized protein (194 aa).

It belongs to the mimivirus L114/R131 family.

This is an uncharacterized protein from Acanthamoeba polyphaga mimivirus (APMV).